A 193-amino-acid chain; its full sequence is V-type sodium ATPase subunit E (193 aa).

It belongs to the V-ATPase E subunit family. In terms of processing, the N-terminus is blocked.

Functionally, involved in ATP-driven sodium extrusion. The protein is V-type sodium ATPase subunit E (ntpE) of Enterococcus hirae (strain ATCC 9790 / DSM 20160 / JCM 8729 / LMG 6399 / NBRC 3181 / NCIMB 6459 / NCDO 1258 / NCTC 12367 / WDCM 00089 / R).